Here is a 270-residue protein sequence, read N- to C-terminus: Formamidopyrimidine-DNA glycosylase (270 aa).

The Schiff-base intermediate with DNA role is filled by Pro-2. The active-site Proton donor is Glu-3. Residue Lys-57 is the Proton donor; for beta-elimination activity of the active site. The DNA site is built by His-90, Arg-109, and Arg-151. The FPG-type zinc finger occupies 236-270; that stretch reads QVYGRGGKLCMVCSNRLKEVRLGQRSTVYCTQCQR. The active-site Proton donor; for delta-elimination activity is the Arg-260.

This sequence belongs to the FPG family. Monomer. It depends on Zn(2+) as a cofactor.

The enzyme catalyses Hydrolysis of DNA containing ring-opened 7-methylguanine residues, releasing 2,6-diamino-4-hydroxy-5-(N-methyl)formamidopyrimidine.. It catalyses the reaction 2'-deoxyribonucleotide-(2'-deoxyribose 5'-phosphate)-2'-deoxyribonucleotide-DNA = a 3'-end 2'-deoxyribonucleotide-(2,3-dehydro-2,3-deoxyribose 5'-phosphate)-DNA + a 5'-end 5'-phospho-2'-deoxyribonucleoside-DNA + H(+). In terms of biological role, involved in base excision repair of DNA damaged by oxidation or by mutagenic agents. Acts as a DNA glycosylase that recognizes and removes damaged bases. Has a preference for oxidized purines, such as 7,8-dihydro-8-oxoguanine (8-oxoG). Has AP (apurinic/apyrimidinic) lyase activity and introduces nicks in the DNA strand. Cleaves the DNA backbone by beta-delta elimination to generate a single-strand break at the site of the removed base with both 3'- and 5'-phosphates. This is Formamidopyrimidine-DNA glycosylase from Idiomarina loihiensis (strain ATCC BAA-735 / DSM 15497 / L2-TR).